The following is a 592-amino-acid chain: Methionine--tRNA ligase (592 aa).

Residues 12–22 (PYANGPFHVGH) carry the 'HIGH' region motif. The Zn(2+) site is built by Cys144, Cys147, Cys157, and Cys160. The 'KMSKS' region signature appears at 342-346 (KMSTS). Position 345 (Thr345) interacts with ATP.

It belongs to the class-I aminoacyl-tRNA synthetase family. MetG type 1 subfamily. As to quaternary structure, monomer. Zn(2+) is required as a cofactor.

The protein localises to the cytoplasm. The enzyme catalyses tRNA(Met) + L-methionine + ATP = L-methionyl-tRNA(Met) + AMP + diphosphate. Functionally, is required not only for elongation of protein synthesis but also for the initiation of all mRNA translation through initiator tRNA(fMet) aminoacylation. This Roseiflexus sp. (strain RS-1) protein is Methionine--tRNA ligase.